A 169-amino-acid polypeptide reads, in one-letter code: NAD(P)H-quinone oxidoreductase subunit J, chloroplastic (169 aa).

It belongs to the complex I 30 kDa subunit family. In terms of assembly, NDH is composed of at least 16 different subunits, 5 of which are encoded in the nucleus.

Its subcellular location is the plastid. The protein resides in the chloroplast thylakoid membrane. The enzyme catalyses a plastoquinone + NADH + (n+1) H(+)(in) = a plastoquinol + NAD(+) + n H(+)(out). The catalysed reaction is a plastoquinone + NADPH + (n+1) H(+)(in) = a plastoquinol + NADP(+) + n H(+)(out). NDH shuttles electrons from NAD(P)H:plastoquinone, via FMN and iron-sulfur (Fe-S) centers, to quinones in the photosynthetic chain and possibly in a chloroplast respiratory chain. The immediate electron acceptor for the enzyme in this species is believed to be plastoquinone. Couples the redox reaction to proton translocation, and thus conserves the redox energy in a proton gradient. This is NAD(P)H-quinone oxidoreductase subunit J, chloroplastic from Staurastrum punctulatum (Green alga).